Consider the following 77-residue polypeptide: Dermatoxin-A1 (77 aa).

The signal sequence occupies residues 1–22 (MAFLKKSLFLVLFLGLVPLFLC). Positions 23 to 42 (ENEKREGENEKEENDDQSEE) are excised as a propeptide. Gln-76 carries the glutamine amide modification.

The protein belongs to the frog skin active peptide (FSAP) family. Dermatoxin subfamily. In terms of tissue distribution, expressed by the skin glands.

It localises to the secreted. In terms of biological role, possesses a potent antimicrobial activity against Gram-positive and Gram-negative bacteria. Probably acts by disturbing membrane functions with its amphipathic structure. The polypeptide is Dermatoxin-A1 (Agalychnis annae (Blue-sided leaf frog)).